The following is a 623-amino-acid chain: Protein Atg16l2 (623 aa).

Positions 64–79 (PKDAISTRHEDWREEV) are enriched in basic and acidic residues. The segment at 64 to 93 (PKDAISTRHEDWREEVSGTGPDQVSSPASL) is disordered. Residues 116–229 (VKKSAALDTL…ANQALVSQEL (114 aa)) are a coiled coil. 7 WD repeats span residues 338–377 (AHLS…LEAN), 382–421 (GAGG…SKET), 424–458 (GHKD…LGRA), 459–502 (YCSR…CIQV), 504–543 (PVQG…IRQV), 550–589 (KCSS…LETS), and 593–623 (PHCT…VLWH).

This sequence belongs to the WD repeat ATG16 family. Homooligomer. Heterooligomer with ATG16L2. Interacts with ATG5. Self-oligomerizes to form a 800-kDa complex composed of ATG12-ATG5 and ATG16L2. Interacts with RAB33B. In terms of tissue distribution, widely expressed.

Its subcellular location is the cytoplasm. It is found in the cytosol. Its function is as follows. May play a role in regulating epithelial homeostasis in an ATG16L1-dependent manner. This Mus musculus (Mouse) protein is Protein Atg16l2 (Atg16l2).